The chain runs to 61 residues: Large ribosomal subunit protein bL32 (61 aa).

Positions 1–18 are enriched in basic residues; sequence MAIVPKRKTSKQRKRKRQ. A disordered region spans residues 1-20; the sequence is MAIVPKRKTSKQRKRKRQTH.

Belongs to the bacterial ribosomal protein bL32 family.

This is Large ribosomal subunit protein bL32 (rpmF) from Mycoplasmopsis pulmonis (strain UAB CTIP) (Mycoplasma pulmonis).